Reading from the N-terminus, the 79-residue chain is Dolichyl-diphosphooligosaccharide--protein glycosyltransferase subunit TMEM258 (79 aa).

Helical transmembrane passes span 17–37 and 55–75; these read VFPH…AWFF and LISL…LLWV.

Belongs to the OST5 family. In terms of assembly, component of the oligosaccharyltransferase (OST) complex.

Its subcellular location is the membrane. It is found in the endoplasmic reticulum. The protein localises to the cytoplasm. The protein operates within protein modification; protein glycosylation. Subunit of the oligosaccharyl transferase (OST) complex that catalyzes the initial transfer of a defined glycan (Glc(3)Man(9)GlcNAc(2) in eukaryotes) from the lipid carrier dolichol-pyrophosphate to an asparagine residue within an Asn-X-Ser/Thr consensus motif in nascent polypeptide chains, the first step in protein N-glycosylation. N-glycosylation occurs cotranslationally and the complex associates with the Sec61 complex at the channel-forming translocon complex that mediates protein translocation across the endoplasmic reticulum (ER). All subunits are required for a maximal enzyme activity. This is Dolichyl-diphosphooligosaccharide--protein glycosyltransferase subunit TMEM258 from Gallus gallus (Chicken).